The following is a 1159-amino-acid chain: MSLNVVMGNGQHDLRSEMLTMIQQQFCQNELLTVFYIVPNHVKFDSEVNVLQRFSIMNGNDDSELYAQSRLQVYSLTRLAWALMKNTPDRQPDIVEPTGLFMIVSNILREQSDNLPVFSRMQTKSGFVSALVAQLVELRASNVTPENLLEVLEKSADNIFLRQTLNAKLHDLAIVADDFNARMGENQITGQETLIAFAKQLADLKLSNVAFYFDGFNGFTSAEMMVVNQLITTYPVTMGILGDPEKMGQQREGDVFFKPMTTVEQLSITARTAQQEVAITAATKMRPLSRTAQQVLGAWACLGEYRNFTGSRDEVHLNVFAAENPITEIKEVARRIRRSLVDDPTLHLRDIIILSRDLTPYQAHIEAVMSQFELPYFLDMDVNMMNHPLVELILNLLAPNKFQYQTMLAILKTGLLRPTFENKIVSHDEFFDIVSHMDNYLYAYRPYESRWRDFSRPFKLFQVTRDDDDTEISEDEKVNNRLEYLRHFIVEAFDELDDGFAMAKNLRQSVTHLVLWLQKYHVTDALLEQRDDFIAQGNLSRSQQSEEVWQMLTKTLDEMVEIDGERSVSLTDIVTTLQAGLSGAKFSGIPNNLDQLMISEAGIVQNTQYKQLYFIGGTRQNLPAQVKNAALINDAERSIVQPALQSGTNPRYLQNTAQQQMAEENLLFYGSLMSSIGSITLSYPILEPSGQLAEMSPFFKRLVDTFNSEVEVIGSIPSSAASLLKQYVGTARATLSDLVKILPVYGQTAAFKAVQNVISNTMQDRLERVLSAPNYQNNTTKLKPEFISALFGERLNVSISQLESYYSNPFAYFLQYGLKLQERATNELNVAQTGTLYHAVFENVLHELIVKNKSLRDITGDELRALVRQHMQSQLALPAFEILNDSGKMRATTNYLTRVCETLVLNLQAAARENTSKPEAVEQLFGFSKESLPPLSFARMQVRGKLDRFDKQDVNGEFGTIIDYKSNGKTFNWGQAYDGLQMQLLTYWDAAQQSAEKLGVAAIGGAFFAKISPEKTKITDKTDLNALFTGKLIPETFKYRGLFISEPAYVSALTTLEPQEKSAHYPVVLLKNGALGKIGVDAVDPDEFALLLQRNRENIITAGDLILSGYFPIMPVEGGLTYSPYLDIIRFDRALGDAYKVQSPADKNTIIKLLKGGQD.

This sequence belongs to the helicase family. AddB/RexB type 2 subfamily. In terms of assembly, heterodimer of AddA and RexB. It depends on Mg(2+) as a cofactor.

In terms of biological role, the heterodimer acts as both an ATP-dependent DNA helicase and an ATP-dependent, dual-direction single-stranded exonuclease. Recognizes the chi site generating a DNA molecule suitable for the initiation of homologous recombination. This subunit has 5' -&gt; 3' nuclease activity but not helicase activity. The chain is ATP-dependent helicase/deoxyribonuclease subunit B from Leuconostoc mesenteroides subsp. mesenteroides (strain ATCC 8293 / DSM 20343 / BCRC 11652 / CCM 1803 / JCM 6124 / NCDO 523 / NBRC 100496 / NCIMB 8023 / NCTC 12954 / NRRL B-1118 / 37Y).